Reading from the N-terminus, the 169-residue chain is Peptide deformylase (169 aa).

Positions 91 and 133 each coordinate Fe cation. Glu-134 is an active-site residue. His-137 is a Fe cation binding site.

This sequence belongs to the polypeptide deformylase family. Fe(2+) serves as cofactor.

The catalysed reaction is N-terminal N-formyl-L-methionyl-[peptide] + H2O = N-terminal L-methionyl-[peptide] + formate. Functionally, removes the formyl group from the N-terminal Met of newly synthesized proteins. Requires at least a dipeptide for an efficient rate of reaction. N-terminal L-methionine is a prerequisite for activity but the enzyme has broad specificity at other positions. This Klebsiella pneumoniae subsp. pneumoniae (strain ATCC 700721 / MGH 78578) protein is Peptide deformylase.